The following is a 421-amino-acid chain: Diaminobutyrate--2-oxoglutarate transaminase (421 aa).

An N6-(pyridoxal phosphate)lysine modification is found at K267.

This sequence belongs to the class-III pyridoxal-phosphate-dependent aminotransferase family. Homohexamer. The cofactor is pyridoxal 5'-phosphate.

It carries out the reaction L-2,4-diaminobutanoate + 2-oxoglutarate = L-aspartate 4-semialdehyde + L-glutamate. It participates in amine and polyamine biosynthesis; ectoine biosynthesis; L-ectoine from L-aspartate 4-semialdehyde: step 1/3. Functionally, catalyzes reversively the conversion of L-aspartate beta-semialdehyde (ASA) to L-2,4-diaminobutyrate (DABA) by transamination with L-glutamate. Seems to use L-glutamate specifically as the amino group donor to ASA, as it is not active with L-alanine, L-glutamine, L-aspartate and L-lysine, and is only poorly active with L-homoserine. In the reverse reaction, gamma-aminobutyric acid (GABA) and L-ornithine can also be used as amino group donors to 2-oxoglutarate, but with a reduced activity compared to that with DABA. The sequence is that of Diaminobutyrate--2-oxoglutarate transaminase (ectB) from Halomonas elongata (strain ATCC 33173 / DSM 2581 / NBRC 15536 / NCIMB 2198 / 1H9).